Consider the following 371-residue polypeptide: tRNA 2-selenouridine synthase (371 aa).

Residues 12–135 enclose the Rhodanese domain; that stretch reads FLDDVPMMDM…MRTFLLDTTQ (124 aa). Cysteine 95 serves as the catalytic S-selanylcysteine intermediate.

Belongs to the SelU family. As to quaternary structure, monomer.

It carries out the reaction 5-methylaminomethyl-2-thiouridine(34) in tRNA + selenophosphate + (2E)-geranyl diphosphate + H2O + H(+) = 5-methylaminomethyl-2-selenouridine(34) in tRNA + (2E)-thiogeraniol + phosphate + diphosphate. The catalysed reaction is 5-methylaminomethyl-2-thiouridine(34) in tRNA + (2E)-geranyl diphosphate = 5-methylaminomethyl-S-(2E)-geranyl-thiouridine(34) in tRNA + diphosphate. The enzyme catalyses 5-methylaminomethyl-S-(2E)-geranyl-thiouridine(34) in tRNA + selenophosphate + H(+) = 5-methylaminomethyl-2-(Se-phospho)selenouridine(34) in tRNA + (2E)-thiogeraniol. It catalyses the reaction 5-methylaminomethyl-2-(Se-phospho)selenouridine(34) in tRNA + H2O = 5-methylaminomethyl-2-selenouridine(34) in tRNA + phosphate. In terms of biological role, involved in the post-transcriptional modification of the uridine at the wobble position (U34) of tRNA(Lys), tRNA(Glu) and tRNA(Gln). Catalyzes the conversion of 2-thiouridine (S2U-RNA) to 2-selenouridine (Se2U-RNA). Acts in a two-step process involving geranylation of 2-thiouridine (S2U) to S-geranyl-2-thiouridine (geS2U) and subsequent selenation of the latter derivative to 2-selenouridine (Se2U) in the tRNA chain. This chain is tRNA 2-selenouridine synthase, found in Pseudomonas entomophila (strain L48).